We begin with the raw amino-acid sequence, 230 residues long: uncharacterized protein (230 aa).

This sequence belongs to the transferase hexapeptide repeat family.

This is an uncharacterized protein from Escherichia coli (strain K12).